A 30-amino-acid polypeptide reads, in one-letter code: Neurotoxin II.22.5 (30 aa).

Positions 1 to 30 (KEGYIVNYHTGCKYTCAKLGDNDYCLRECK) constitute an LCN-type CS-alpha/beta domain.

Belongs to the long (4 C-C) scorpion toxin superfamily. Sodium channel inhibitor family. Beta subfamily. As to expression, expressed by the venom gland.

It localises to the secreted. Functionally, binds to sodium channels (Nav) and inhibits the inactivation of the activated channels, thereby blocking neuronal transmission. In Centruroides tecomanus (Scorpion), this protein is Neurotoxin II.22.5.